The sequence spans 427 residues: Glycophorin-binding protein-related antigen (427 aa).

GBP repeat units lie at residues 109–149 (LTSA…DELE), 150–189 (TSAD…DEVE), 190–229 (SSAD…DELE), 230–269 (TSAD…EVET), 270–307 (SADP…SEVE), 308–347 (TSAD…DELE), 348–387 (TSAD…DELE), and 388–427 (TSAD…DESS).

The polypeptide is Glycophorin-binding protein-related antigen (GBPH) (Plasmodium falciparum (isolate FCBR / Columbia)).